Here is a 687-residue protein sequence, read N- to C-terminus: Polyphosphate kinase (687 aa).

Asn-45 provides a ligand contact to ATP. The Mg(2+) site is built by Arg-375 and Arg-405. The active-site Phosphohistidine intermediate is His-435. 3 residues coordinate ATP: Tyr-472, Arg-568, and His-596.

Belongs to the polyphosphate kinase 1 (PPK1) family. Mg(2+) is required as a cofactor. Post-translationally, an intermediate of this reaction is the autophosphorylated ppk in which a phosphate is covalently linked to a histidine residue through a N-P bond.

It catalyses the reaction [phosphate](n) + ATP = [phosphate](n+1) + ADP. Catalyzes the reversible transfer of the terminal phosphate of ATP to form a long-chain polyphosphate (polyP). This is Polyphosphate kinase from Burkholderia cenocepacia (strain HI2424).